Here is a 196-residue protein sequence, read N- to C-terminus: CRISPR-associated exonuclease Cas4 (196 aa).

Cysteine 23 contributes to the [4Fe-4S] cluster binding site. Positions 50, 90, and 103 each coordinate Mn(2+). [4Fe-4S] cluster is bound by residues cysteine 184, cysteine 187, and cysteine 193.

It belongs to the CRISPR-associated exonuclease Cas4 family. It depends on Mg(2+) as a cofactor. The cofactor is [4Fe-4S] cluster.

It catalyses the reaction exonucleolytic cleavage in the 5'- to 3'-direction to yield nucleoside 3'-phosphates.. Functionally, CRISPR (clustered regularly interspaced short palindromic repeat) is an adaptive immune system that provides protection against mobile genetic elements (viruses, transposable elements and conjugative plasmids). CRISPR clusters contain sequences complementary to antecedent mobile elements and target invading nucleic acids. CRISPR clusters are transcribed and processed into CRISPR RNA (crRNA). This may be a 5' to 3' ssDNA exonuclease. The protein is CRISPR-associated exonuclease Cas4 of Francisella tularensis subsp. novicida (strain U112).